Reading from the N-terminus, the 77-residue chain is Apidermin 2 (77 aa).

A signal peptide spans 1-16 (MKSLLILFAIVAVVAA).

Expressed in the epidermis, hypopharyngeal glands, fat body, trachea, esophagus and stomach.

Its subcellular location is the secreted. Antimicrobial peptide that binds cell wall carbohydrates of microbial symbionts and induces structural damage. Binds the cell wall carbohydrates mannan, N-acetyl-D-glucosamine and lipopolysaccharide. Can target fungi, Gram-negative and Gram-positive bacteria. The polypeptide is Apidermin 2 (Apis mellifera (Honeybee)).